The sequence spans 349 residues: Phosphoribosylformylglycinamidine cyclo-ligase (349 aa).

The protein belongs to the AIR synthase family.

It is found in the cytoplasm. It carries out the reaction 2-formamido-N(1)-(5-O-phospho-beta-D-ribosyl)acetamidine + ATP = 5-amino-1-(5-phospho-beta-D-ribosyl)imidazole + ADP + phosphate + H(+). It participates in purine metabolism; IMP biosynthesis via de novo pathway; 5-amino-1-(5-phospho-D-ribosyl)imidazole from N(2)-formyl-N(1)-(5-phospho-D-ribosyl)glycinamide: step 2/2. This chain is Phosphoribosylformylglycinamidine cyclo-ligase, found in Jannaschia sp. (strain CCS1).